The sequence spans 1205 residues: MDPPAGAAGRLLCPALLLLLLLPLPADARLAAAAADPPGGPQGHGAERILAVPVRTDAQGRLVSHVVSAATAPAGVRTRRAAPAQIPGLSGGSEEDPGGRLFYNVTVFGRDLHLRLRPNARLVAPGATVEWQGESGATRVEPLLGTCLYVGDVAGLAESSSVALSNCDGLAGLIRMEEEEFFIEPLEKGLAAKEAEQGRVHVVYHRPTTSRPPPLGGPQALDTGISADSLDSLSRALGVLEERVNSSRRRMRRHAADDDYNIEVLLGVDDSVVQFHGTEHVQKYLLTLMNIVNEIYHDESLGAHINVVLVRIILLSYGKSMSLIEIGNPSQSLENVCRWAYLQQKPDTDHDEYHDHAIFLTRQDFGPSGMQGYAPVTGMCHPVRSCTLNHEDGFSSAFVVAHETGHVLGMEHDGQGNRCGDEVRLGSIMAPLVQAAFHRFHWSRCSQQELSRYLHSYDCLRDDPFTHDWPALPQLPGLHYSMNEQCRFDFGLGYMMCTAFRTFDPCKQLWCSHPDNPYFCKTKKGPPLDGTMCAPGKHCFKGHCIWLTPDILKRDGNWGAWSPFGSCSRTCGTGVKFRTRQCDNPHPANGGRTCSGLAYDFQLCNSQDCPDALADFREEQCRQWDLYFEHGDAQHHWLPHEHRDAKERCHLYCESKETGEVVSMKRMVHDGTRCSYKDAFSLCVRGDCRKVGCDGVIGSSKQEDKCGVCGGDNSHCKVVKGTFSRSPKKLGYIKMFEIPAGARHLLIQEADTTSHHLAVKNLETGKFILNEENDVDPNSKTFIAMGVEWEYRDEDGRETLQTMGPLHGTITVLVIPEGDARISLTYKYMIHEDSLNVDDNNVLEDDSVGYEWALKKWSPCSKPCGGGSQFTKYGCRRRLDHKMVHRGFCDSVSKPKAIRRTCNPQECSQPVWVTGEWEPCSRSCGRTGMQVRSVRCVQPLHNNTTRSVHTKHCNDARPEGRRACNRELCPGRWRAGSWSQCSVTCGNGTQERPVLCRTADDSFGVCREERPETARICRLGPCPRNTSDPSKKSYVVQWLSRPDPNSPVQETSSKGRCQGDKSVFCRMEVLSRYCSIPGYNKLCCKSCNPHDNLTDVDDRAEPPSGKHNDIEELMPTLSVPTLVMEVQPPPGIPLEVPLNTSSTNATEDHPETNAVDVPYKIPGLEDEVQPPNLIPRRPSPYEKTRNQRIQELIDEMRKKEMLGKF.

Positions 1–28 (MDPPAGAAGRLLCPALLLLLLLPLPADA) are cleaved as a signal peptide. Residues 29–253 (RLAAAAADPP…VNSSRRRMRR (225 aa)) constitute a propeptide that is removed on maturation. 2 N-linked (GlcNAc...) asparagine glycosylation sites follow: asparagine 104 and asparagine 245. Residues 260–464 (YNIEVLLGVD…HSYDCLRDDP (205 aa)) form the Peptidase M12B domain. 10 disulfide bridges follow: cysteine 337–cysteine 386, cysteine 380–cysteine 459, cysteine 419–cysteine 445, cysteine 486–cysteine 511, cysteine 497–cysteine 520, cysteine 506–cysteine 539, cysteine 533–cysteine 544, cysteine 567–cysteine 604, cysteine 571–cysteine 609, and cysteine 582–cysteine 594. Histidine 402 is a Zn(2+) binding site. Glutamate 403 is a catalytic residue. Zn(2+)-binding residues include histidine 406 and histidine 412. Residues 474–554 (QLPGLHYSMN…IWLTPDILKR (81 aa)) form the Disintegrin domain. In terms of domain architecture, TSP type-1 1 spans 555–610 (DGNWGAWSPFGSCSRTCGTGVKFRTRQCDNPHPANGGRTCSGLAYDFQLCNSQDCP). The Cell attachment site signature appears at 685 to 687 (RGD). The interval 717–845 (KVVKGTFSRS…NVDDNNVLED (129 aa)) is spacer. TSP type-1 domains are found at residues 848–906 (VGYE…NPQE), 908–968 (SQPV…NREL), and 969–1023 (CPGR…GPCP). Residues asparagine 942, asparagine 943, and asparagine 987 are each glycosylated (N-linked (GlcNAc...) asparagine). 3 disulfides stabilise this stretch: cysteine 981/cysteine 1017, cysteine 985/cysteine 1022, and cysteine 996/cysteine 1006. The N-linked (GlcNAc...) asparagine glycan is linked to asparagine 1025. Residues 1053 to 1091 (SKGRCQGDKSVFCRMEVLSRYCSIPGYNKLCCKSCNPHD) form the PLAC domain. Residues asparagine 1092, asparagine 1139, and asparagine 1144 are each glycosylated (N-linked (GlcNAc...) asparagine). The tract at residues 1163 to 1184 (GLEDEVQPPNLIPRRPSPYEKT) is disordered.

As to quaternary structure, may belong to a multimeric complex. Binds specifically to collagen type XIV. The cofactor is Zn(2+). Post-translationally, the N-terminus is blocked. The precursor is cleaved by a furin endopeptidase. In terms of processing, glycosylated. Can be O-fucosylated by POFUT2 on a serine or a threonine residue found within the consensus sequence C1-X(2)-(S/T)-C2-G of the TSP type-1 repeat domains where C1 and C2 are the first and second cysteine residue of the repeat, respectively. Fucosylated repeats can then be further glycosylated by the addition of a beta-1,3-glucose residue by the glucosyltransferase, B3GALTL. Fucosylation mediates the efficient secretion of ADAMTS family members. Can also be C-glycosylated with one or two mannose molecules on tryptophan residues within the consensus sequence W-X-X-W of the TPRs, and N-glycosylated. These other glycosylations can also facilitate secretion. In terms of tissue distribution, enzymatic activity is detected at high level in all type I collagen-rich tissues such as skin, bones, tendons and aorta and at low level in brain and thymus. The mRNA levels were disproportionately high in heart, liver, retina and muscle.

It is found in the secreted. The protein resides in the extracellular space. Its subcellular location is the extracellular matrix. It catalyses the reaction Cleaves the N-propeptide of collagen chain alpha1(I) at Pro-|-Gln and of alpha1(II) and alpha2(I) at Ala-|-Gln.. Functionally, cleaves the propeptides of type I and II collagen prior to fibril assembly. Does not act on type III collagen. Cleaves lysyl oxidase LOX at a site downstream of its propeptide cleavage site to produce a short LOX form with reduced collagen-binding activity. This Bos taurus (Bovine) protein is A disintegrin and metalloproteinase with thrombospondin motifs 2 (ADAMTS2).